The sequence spans 93 residues: MAKSSASSLSSAKPVAAGPDASAPALPVSYEAALQELEGLVSRLESGQLPLDQLLAGYQRGAQLLKFCRDRLEAVETQIKVLEGTELKPWLQA.

The segment covering 1 to 17 has biased composition (low complexity); it reads MAKSSASSLSSAKPVAA. Positions 1 to 22 are disordered; sequence MAKSSASSLSSAKPVAAGPDAS.

This sequence belongs to the XseB family. As to quaternary structure, heterooligomer composed of large and small subunits.

It is found in the cytoplasm. The enzyme catalyses Exonucleolytic cleavage in either 5'- to 3'- or 3'- to 5'-direction to yield nucleoside 5'-phosphates.. Functionally, bidirectionally degrades single-stranded DNA into large acid-insoluble oligonucleotides, which are then degraded further into small acid-soluble oligonucleotides. This chain is Exodeoxyribonuclease 7 small subunit, found in Polaromonas naphthalenivorans (strain CJ2).